The primary structure comprises 889 residues: 97 kDa heat shock protein (889 aa).

Disordered stretches follow at residues 504-622 and 812-889; these read EDAM…ATTD and FVCD…MELD. Basic and acidic residues predominate over residues 549–585; sequence SADKEEQADNGSKETSKDSKDQTSESSKSDKESKDQN. Residues 586-597 are compositionally biased toward polar residues; that stretch reads SEGSKSDNSSTE. Residues 869 to 889 are compositionally biased toward basic and acidic residues; the sequence is ASKEGETKPDETKPDVEMELD.

This sequence belongs to the heat shock protein 70 family.

In terms of biological role, cell surface recognition protein that binds acrosome-reacted sperm and thereby mediates binding and subsequent fusion of the sperm and egg. In Strongylocentrotus purpuratus (Purple sea urchin), this protein is 97 kDa heat shock protein.